The sequence spans 273 residues: Transmembrane epididymal protein 1 (273 aa).

6 helical membrane-spanning segments follow: residues 34–54 (IVTGSLLTFYVVLCLDGGMVL), 72–92 (LTMFILLTLNGCVDFMSKNVL), 96–116 (CVGLEKGTLVLIIYELLLLMV), 129–149 (VYSLLILVVFLLLLVLTAELW), 158–178 (LMETFLILMMGSWLMQAGFIL), and 195–215 (IMFVTTFFCWHVMINASFLLG).

Belongs to the TMEM45 family.

It localises to the membrane. The sequence is that of Transmembrane epididymal protein 1 (TEDDM1) from Homo sapiens (Human).